The following is a 34-amino-acid chain: U4-theraphotoxin-Hs1a (34 aa).

Intrachain disulfides connect C3–C17, C10–C22, and C16–C33.

Belongs to the neurotoxin 14 (magi-1) family. 05 (ICK-7) subfamily. Expressed by the venom gland.

Its subcellular location is the secreted. Intracisternal injection paralyzes mice. The chain is U4-theraphotoxin-Hs1a from Cyriopagopus schmidti (Chinese bird spider).